Reading from the N-terminus, the 290-residue chain is 4-hydroxybenzoate octaprenyltransferase (290 aa).

Transmembrane regions (helical) follow at residues Trp41–Met61, Trp89–Leu109, Phe133–Phe153, Gly158–Tyr178, Phe202–Ile224, and Trp269–Gly289.

It belongs to the UbiA prenyltransferase family. The cofactor is Mg(2+).

It is found in the cell inner membrane. The enzyme catalyses all-trans-octaprenyl diphosphate + 4-hydroxybenzoate = 4-hydroxy-3-(all-trans-octaprenyl)benzoate + diphosphate. The protein operates within cofactor biosynthesis; ubiquinone biosynthesis. Its function is as follows. Catalyzes the prenylation of para-hydroxybenzoate (PHB) with an all-trans polyprenyl group. Mediates the second step in the final reaction sequence of ubiquinone-8 (UQ-8) biosynthesis, which is the condensation of the polyisoprenoid side chain with PHB, generating the first membrane-bound Q intermediate 3-octaprenyl-4-hydroxybenzoate. The protein is 4-hydroxybenzoate octaprenyltransferase of Burkholderia vietnamiensis (strain G4 / LMG 22486) (Burkholderia cepacia (strain R1808)).